A 266-amino-acid chain; its full sequence is MKLSLSPPPYADAPVVVLISGLGGSGSYWLPQLAVLEQEYQVVCYDQRGTGNNPDTLAEDYSITQMAAELHQALVAAGIERYAVVGHALGALVGMQLALDYPASVTVLISVNGWLRINAHTRRCFQVRERLLYSGGAQAWVEAQPLFLYPADWMAARAPRLEAEDALALAHFQGKNNLLRRLNALKRADFSHHADRIRCPVQIICASDDLLVPSACSSELHAALPDSQKMVMRYGGHACNVTDPETFNALLLNGLASLLHHREAAL.

Belongs to the AB hydrolase superfamily. Hydrolase RutD family.

The enzyme catalyses carbamate + 2 H(+) = NH4(+) + CO2. In terms of biological role, involved in pyrimidine catabolism. May facilitate the hydrolysis of carbamate, a reaction that can also occur spontaneously. In Escherichia coli O139:H28 (strain E24377A / ETEC), this protein is Putative carbamate hydrolase RutD.